The sequence spans 218 residues: MAVAPARARSDYDYLIKLLLIGDSGVGKSCLLLRFSDDTFTTSFITTIGIDFKIRTVELDGKRIKLQIWDTAGQERFRTITTAYYRGAMGILLVYDVTDESSFNNIRNWMKNIEQHASDSVNKILVGNKADMDESKRAVPTSKGQALADEYGIKFFETSAKTNQNVEQVFLSIAKDIKQRLTESDTKAEPQGIKITKQDANKASSSSTNEKSACCSYV.

A GTP-binding site is contributed by 22–29 (GDSGVGKS). An Effector region motif is present at residues 44 to 52 (FITTIGIDF). Residues 70–74 (DTAGQ), 128–131 (NKAD), and 159–160 (SA) contribute to the GTP site. Positions 182–218 (TESDTKAEPQGIKITKQDANKASSSSTNEKSACCSYV) are disordered. Positions 201–211 (NKASSSSTNEK) are enriched in polar residues. 2 S-geranylgeranyl cysteine lipidation sites follow: Cys-214 and Cys-215.

The protein belongs to the small GTPase superfamily. Rab family. In terms of assembly, interacts with PI5K2.

The protein localises to the golgi apparatus membrane. It is found in the cell membrane. Involved in membrane trafficking from the Golgi to the plasma membrane. This is Ras-related protein RABE1e (RABE1E) from Arabidopsis thaliana (Mouse-ear cress).